We begin with the raw amino-acid sequence, 69 residues long: Ferredoxin-1 (69 aa).

[3Fe-4S] cluster is bound by residues Cys12, Cys18, and Cys57.

The cofactor is [3Fe-4S] cluster.

Functionally, electron transport protein for the cytochrome P-450-SU1 system. In Streptomyces griseolus, this protein is Ferredoxin-1 (suaB).